The sequence spans 1035 residues: Putative protein FAM47C (1035 aa).

Disordered regions lie at residues 1–21 (MGDQ…TPWY) and 159–797 (LEDA…RRVS). Basic and acidic residues predominate over residues 159–173 (LEDAGSCEGQEKTTD). Residues 380–392 (PEPPKTRVPPLRP) are compositionally biased toward pro residues. Positions 478-490 (PPEKDVSHLRPEP) are enriched in basic and acidic residues. A compositionally biased stretch (polar residues) spans 533–544 (SLHQAPPESSVS). Basic and acidic residues-rich tracts occupy residues 611 to 622 (PETRVSHLRPEP), 683 to 694 (PETRVSHLRPEP), and 753 to 766 (EPLE…RPEP).

It belongs to the FAM47 family.

The chain is Putative protein FAM47C (FAM47C) from Homo sapiens (Human).